Here is a 474-residue protein sequence, read N- to C-terminus: ABHD16B (474 aa).

In terms of domain architecture, AB hydrolase-1 spans 175-293 (VICCEGNAGF…MPQSWKGLVV (119 aa)). Catalysis depends on charge relay system residues Ser248, Asp323, and His423.

The protein belongs to the AB hydrolase superfamily. ABHD16 family.

The enzyme catalyses a 1,2-diacyl-sn-glycero-3-phospho-L-serine + H2O = a 2-acyl-sn-glycero-3-phospho-L-serine + a fatty acid + H(+). It carries out the reaction a 1-acylglycerol + H2O = glycerol + a fatty acid + H(+). The catalysed reaction is 1-(9Z-octadecenoyl)-glycerol + H2O = glycerol + (9Z)-octadecenoate + H(+). Its function is as follows. Hydrolyzes the sn-1 position of glycerophospholipids with high specificity towards phosphatidylserine (PS), PS-PLA1 enzyme. Also hydrolyzes the acyl chain of glycerolipids with a preference for the monoacylglycerol (MAG) 1-acylglycerol, MAG lipase. Plays a regulatory role in cellular lipid homeostasis by modulating genes involved in neutral lipid degradation and in phospholipid synthesis and composition. This is ABHD16B from Rattus norvegicus (Rat).